A 121-amino-acid chain; its full sequence is Small ribosomal subunit protein uS13 (121 aa).

The disordered stretch occupies residues 97–121 (VRGQRTRTNARTRRGARKTVAGKKK). Over residues 100–121 (QRTRTNARTRRGARKTVAGKKK) the composition is skewed to basic residues.

It belongs to the universal ribosomal protein uS13 family. As to quaternary structure, part of the 30S ribosomal subunit. Forms a loose heterodimer with protein S19. Forms two bridges to the 50S subunit in the 70S ribosome.

Located at the top of the head of the 30S subunit, it contacts several helices of the 16S rRNA. In the 70S ribosome it contacts the 23S rRNA (bridge B1a) and protein L5 of the 50S subunit (bridge B1b), connecting the 2 subunits; these bridges are implicated in subunit movement. Contacts the tRNAs in the A and P-sites. The sequence is that of Small ribosomal subunit protein uS13 from Synechococcus sp. (strain CC9902).